The primary structure comprises 539 residues: GMP synthase [glutamine-hydrolyzing] (539 aa).

A Glutamine amidotransferase type-1 domain is found at 4–202 (KILILDFGSQ…VLDIAGAKPD (199 aa)). Residue C81 is the Nucleophile of the active site. Catalysis depends on residues H176 and E178. A GMPS ATP-PPase domain is found at 203 to 395 (WIMRDHIEEA…LGLPAEMVYR (193 aa)). 230–236 (SGGVDSS) contacts ATP.

As to quaternary structure, homodimer.

The catalysed reaction is XMP + L-glutamine + ATP + H2O = GMP + L-glutamate + AMP + diphosphate + 2 H(+). It participates in purine metabolism; GMP biosynthesis; GMP from XMP (L-Gln route): step 1/1. Functionally, catalyzes the synthesis of GMP from XMP. The chain is GMP synthase [glutamine-hydrolyzing] from Burkholderia pseudomallei (strain 1106a).